Reading from the N-terminus, the 429-residue chain is Glutamate-1-semialdehyde 2,1-aminomutase 1 (429 aa).

Residue Lys-268 is modified to N6-(pyridoxal phosphate)lysine.

The protein belongs to the class-III pyridoxal-phosphate-dependent aminotransferase family. HemL subfamily. Homodimer. Requires pyridoxal 5'-phosphate as cofactor.

Its subcellular location is the cytoplasm. It carries out the reaction (S)-4-amino-5-oxopentanoate = 5-aminolevulinate. Its pathway is porphyrin-containing compound metabolism; protoporphyrin-IX biosynthesis; 5-aminolevulinate from L-glutamyl-tRNA(Glu): step 2/2. This is Glutamate-1-semialdehyde 2,1-aminomutase 1 from Listeria welshimeri serovar 6b (strain ATCC 35897 / DSM 20650 / CCUG 15529 / CIP 8149 / NCTC 11857 / SLCC 5334 / V8).